Consider the following 176-residue polypeptide: Peptidoglycan-associated lipoprotein (176 aa).

Residues 1 to 32 (MSRIDTPAASRMQTIARNPVMIALVMTLALAG) form the signal peptide. Cysteine 33 carries N-palmitoyl cysteine lipidation. Cysteine 33 carries the S-diacylglycerol cysteine lipid modification. The OmpA-like domain occupies 58–175 (QQDFTVNVGD…RAVTVLGGAG (118 aa)).

Belongs to the Pal lipoprotein family. The Tol-Pal system is composed of five core proteins: the inner membrane proteins TolA, TolQ and TolR, the periplasmic protein TolB and the outer membrane protein Pal. They form a network linking the inner and outer membranes and the peptidoglycan layer.

Its subcellular location is the cell outer membrane. Its function is as follows. Part of the Tol-Pal system, which plays a role in outer membrane invagination during cell division and is important for maintaining outer membrane integrity. This is Peptidoglycan-associated lipoprotein from Rhizobium meliloti (strain 1021) (Ensifer meliloti).